A 269-amino-acid polypeptide reads, in one-letter code: Thiazole synthase (269 aa).

The active-site Schiff-base intermediate with DXP is Lys-105. 1-deoxy-D-xylulose 5-phosphate contacts are provided by residues Gly-166, 192–193 (AG), and 214–215 (NT). The segment at 245–269 (AMSAQDAAQPSTPVLGTPFWHHDHG) is disordered.

The protein belongs to the ThiG family. As to quaternary structure, homotetramer. Forms heterodimers with either ThiH or ThiS.

The protein localises to the cytoplasm. It catalyses the reaction [ThiS sulfur-carrier protein]-C-terminal-Gly-aminoethanethioate + 2-iminoacetate + 1-deoxy-D-xylulose 5-phosphate = [ThiS sulfur-carrier protein]-C-terminal Gly-Gly + 2-[(2R,5Z)-2-carboxy-4-methylthiazol-5(2H)-ylidene]ethyl phosphate + 2 H2O + H(+). It participates in cofactor biosynthesis; thiamine diphosphate biosynthesis. In terms of biological role, catalyzes the rearrangement of 1-deoxy-D-xylulose 5-phosphate (DXP) to produce the thiazole phosphate moiety of thiamine. Sulfur is provided by the thiocarboxylate moiety of the carrier protein ThiS. In vitro, sulfur can be provided by H(2)S. The chain is Thiazole synthase from Paracidovorax citrulli (strain AAC00-1) (Acidovorax citrulli).